The primary structure comprises 601 residues: DNA replication licensing factor MCM3 (601 aa).

An MCM domain is found at 180–386 (PINLLSKSIA…LDRRLSQHVL (207 aa)). Position 229-236 (229-236 (GDPSTAKS)) interacts with ATP. The short motif at 361-364 (SRFD) is the Arginine finger element.

Belongs to the MCM family. In terms of assembly, component of the MCM2-7 complex.

The protein localises to the nucleus. Its subcellular location is the chromosome. It localises to the nucleoplasm. It carries out the reaction ATP + H2O = ADP + phosphate + H(+). In terms of biological role, acts as a component of the MCM2-7 complex (MCM complex) which is the replicative helicase essential for DNA replication initiation and elongation in eukaryotic cells. Required for DNA replication and cell proliferation. The active ATPase sites in the MCM2-7 ring are formed through the interaction surfaces of two neighboring subunits such that a critical structure of a conserved arginine finger motif is provided in trans relative to the ATP-binding site of the Walker A box of the adjacent subunit. This is DNA replication licensing factor MCM3 from Entamoeba histolytica (strain ATCC 30459 / HM-1:IMSS / ABRM).